Reading from the N-terminus, the 302-residue chain is 4-hydroxy-tetrahydrodipicolinate synthase (302 aa).

Thr-55 provides a ligand contact to pyruvate. Tyr-144 acts as the Proton donor/acceptor in catalysis. Lys-172 serves as the catalytic Schiff-base intermediate with substrate. Residue Val-214 participates in pyruvate binding.

The protein belongs to the DapA family. In terms of assembly, homotetramer; dimer of dimers.

It is found in the cytoplasm. It catalyses the reaction L-aspartate 4-semialdehyde + pyruvate = (2S,4S)-4-hydroxy-2,3,4,5-tetrahydrodipicolinate + H2O + H(+). It functions in the pathway amino-acid biosynthesis; L-lysine biosynthesis via DAP pathway; (S)-tetrahydrodipicolinate from L-aspartate: step 3/4. Functionally, catalyzes the condensation of (S)-aspartate-beta-semialdehyde [(S)-ASA] and pyruvate to 4-hydroxy-tetrahydrodipicolinate (HTPA). The chain is 4-hydroxy-tetrahydrodipicolinate synthase from Synechococcus sp. (strain CC9605).